We begin with the raw amino-acid sequence, 197 residues long: Holliday junction branch migration complex subunit RuvA (197 aa).

The tract at residues 1-63 (MIALLNGQLI…EDALLLFGFL (63 aa)) is domain I. A domain II region spans residues 64–142 (TETEKDLFGL…PVQAVPGNAP (79 aa)). A flexible linker region spans residues 142–146 (PLPAE). The tract at residues 147–197 (TAGDLREDALSALVNLGYKENLSRKALDGIDTAPDAPLEDILKQALKLLMR) is domain III.

This sequence belongs to the RuvA family. In terms of assembly, homotetramer. Forms an RuvA(8)-RuvB(12)-Holliday junction (HJ) complex. HJ DNA is sandwiched between 2 RuvA tetramers; dsDNA enters through RuvA and exits via RuvB. An RuvB hexamer assembles on each DNA strand where it exits the tetramer. Each RuvB hexamer is contacted by two RuvA subunits (via domain III) on 2 adjacent RuvB subunits; this complex drives branch migration. In the full resolvosome a probable DNA-RuvA(4)-RuvB(12)-RuvC(2) complex forms which resolves the HJ.

It is found in the cytoplasm. The RuvA-RuvB-RuvC complex processes Holliday junction (HJ) DNA during genetic recombination and DNA repair, while the RuvA-RuvB complex plays an important role in the rescue of blocked DNA replication forks via replication fork reversal (RFR). RuvA specifically binds to HJ cruciform DNA, conferring on it an open structure. The RuvB hexamer acts as an ATP-dependent pump, pulling dsDNA into and through the RuvAB complex. HJ branch migration allows RuvC to scan DNA until it finds its consensus sequence, where it cleaves and resolves the cruciform DNA. This chain is Holliday junction branch migration complex subunit RuvA, found in Syntrophotalea carbinolica (strain DSM 2380 / NBRC 103641 / GraBd1) (Pelobacter carbinolicus).